The chain runs to 156 residues: Small ribosomal subunit protein uS7c (156 aa).

The protein belongs to the universal ribosomal protein uS7 family. As to quaternary structure, part of the 30S ribosomal subunit.

The protein resides in the plastid. It is found in the chloroplast. Functionally, one of the primary rRNA binding proteins, it binds directly to 16S rRNA where it nucleates assembly of the head domain of the 30S subunit. The sequence is that of Small ribosomal subunit protein uS7c (rps7) from Nephroselmis olivacea (Green alga).